Reading from the N-terminus, the 94-residue chain is Histone-like DNA-binding protein (94 aa).

It belongs to the bacterial histone-like protein family.

In Rickettsia bellii (strain RML369-C), this protein is Histone-like DNA-binding protein.